The primary structure comprises 489 residues: UDP-N-acetylmuramoyl-L-alanyl-D-glutamate--2,6-diaminopimelate ligase (489 aa).

A UDP-N-acetyl-alpha-D-muramoyl-L-alanyl-D-glutamate-binding site is contributed by Ser-30. 108–114 is a binding site for ATP; that stretch reads GTNGKTT. UDP-N-acetyl-alpha-D-muramoyl-L-alanyl-D-glutamate contacts are provided by residues Asn-149, 150–151, Ser-177, Gln-183, and Arg-185; that span reads TT. Residue Lys-217 is modified to N6-carboxylysine. Residues Arg-383, 407 to 410, Gly-459, and Glu-463 each bind meso-2,6-diaminopimelate; that span reads DNPR. Residues 407-410 carry the Meso-diaminopimelate recognition motif motif; it reads DNPR.

The protein belongs to the MurCDEF family. MurE subfamily. Mg(2+) serves as cofactor. Carboxylation is probably crucial for Mg(2+) binding and, consequently, for the gamma-phosphate positioning of ATP.

It localises to the cytoplasm. It catalyses the reaction UDP-N-acetyl-alpha-D-muramoyl-L-alanyl-D-glutamate + meso-2,6-diaminopimelate + ATP = UDP-N-acetyl-alpha-D-muramoyl-L-alanyl-gamma-D-glutamyl-meso-2,6-diaminopimelate + ADP + phosphate + H(+). It functions in the pathway cell wall biogenesis; peptidoglycan biosynthesis. Catalyzes the addition of meso-diaminopimelic acid to the nucleotide precursor UDP-N-acetylmuramoyl-L-alanyl-D-glutamate (UMAG) in the biosynthesis of bacterial cell-wall peptidoglycan. The polypeptide is UDP-N-acetylmuramoyl-L-alanyl-D-glutamate--2,6-diaminopimelate ligase (Geobacillus thermodenitrificans (strain NG80-2)).